The chain runs to 101 residues: Chaperone modulatory protein CbpM (101 aa).

It belongs to the CbpM family.

Interacts with CbpA and inhibits both the DnaJ-like co-chaperone activity and the DNA binding activity of CbpA. Together with CbpA, modulates the activity of the DnaK chaperone system. Does not inhibit the co-chaperone activity of DnaJ. This chain is Chaperone modulatory protein CbpM, found in Pseudomonas putida (strain GB-1).